The following is a 582-amino-acid chain: Protein NARROW LEAF 1 (582 aa).

Disordered regions lie at residues 1-26 (MKPS…VDHQ) and 531-582 (GMSP…DLEK). Residues 562 to 572 (LGDREPKRLRS) are compositionally biased toward basic and acidic residues. Residues 567-573 (PKRLRSD) carry the Nuclear localization signal motif. Residues 573–582 (DSGSSLDLEK) are compositionally biased toward low complexity.

In terms of tissue distribution, expressed in leaf sheaths, leaf blades, culms and panicles. Preferentially expressed in vascular tissues in leaves and culms.

The protein localises to the nucleus. It localises to the nucleoplasm. It is found in the cytoplasm. Functionally, involved in the regulation of lateral leaf growth. May be involved in the regulation of basipetal polar auxin transport (PAT) and vascular patterning in leaves. Controls photosynthesis rate by regulating carboxylation efficiency and consequently photosynthesis rate. Controls panicle and spikelet numbers, and grain yield. The sequence is that of Protein NARROW LEAF 1 from Oryza sativa subsp. japonica (Rice).